The primary structure comprises 222 residues: 3-demethoxyubiquinol 3-hydroxylase (222 aa).

Residues glutamate 71, glutamate 101, histidine 104, glutamate 153, glutamate 185, and histidine 188 each coordinate Fe cation.

The protein belongs to the COQ7 family. Fe cation serves as cofactor.

The protein localises to the cell membrane. It carries out the reaction a 5-methoxy-2-methyl-3-(all-trans-polyprenyl)benzene-1,4-diol + AH2 + O2 = a 3-demethylubiquinol + A + H2O. Its pathway is cofactor biosynthesis; ubiquinone biosynthesis. Functionally, catalyzes the hydroxylation of 2-nonaprenyl-3-methyl-6-methoxy-1,4-benzoquinol during ubiquinone biosynthesis. The sequence is that of 3-demethoxyubiquinol 3-hydroxylase from Bordetella bronchiseptica (strain ATCC BAA-588 / NCTC 13252 / RB50) (Alcaligenes bronchisepticus).